Reading from the N-terminus, the 247-residue chain is CDP-diacylglycerol pyrophosphatase (247 aa).

A helical transmembrane segment spans residues 5–22 (IVLALVVSVAVAGGWLWM).

The protein belongs to the Cdh family.

It localises to the cell inner membrane. It catalyses the reaction a CDP-1,2-diacyl-sn-glycerol + H2O = a 1,2-diacyl-sn-glycero-3-phosphate + CMP + 2 H(+). It functions in the pathway phospholipid metabolism; CDP-diacylglycerol degradation; phosphatidate from CDP-diacylglycerol: step 1/1. The sequence is that of CDP-diacylglycerol pyrophosphatase from Enterobacter sp. (strain 638).